The primary structure comprises 145 residues: Flagellar assembly factor FliW (145 aa).

The protein belongs to the FliW family. As to quaternary structure, interacts with translational regulator CsrA and flagellin(s).

Its subcellular location is the cytoplasm. Acts as an anti-CsrA protein, binds CsrA and prevents it from repressing translation of its target genes, one of which is flagellin. Binds to flagellin and participates in the assembly of the flagellum. This chain is Flagellar assembly factor FliW, found in Clostridium kluyveri (strain NBRC 12016).